Reading from the N-terminus, the 553-residue chain is Arginine--tRNA ligase (553 aa).

The short motif at 130 to 140 (ANPTGDLHIGH) is the 'HIGH' region element.

It belongs to the class-I aminoacyl-tRNA synthetase family. As to quaternary structure, monomer.

The protein resides in the cytoplasm. It catalyses the reaction tRNA(Arg) + L-arginine + ATP = L-arginyl-tRNA(Arg) + AMP + diphosphate. This is Arginine--tRNA ligase from Staphylococcus epidermidis (strain ATCC 12228 / FDA PCI 1200).